Reading from the N-terminus, the 861-residue chain is Protein argonaute-3 (861 aa).

M1 carries the N-acetylmethionine modification. The region spanning 230–349 is the PAZ domain; that stretch reads PVIQFMCEVL…LPLEVCNIVA (120 aa). In terms of domain architecture, Piwi spans 518–820; the sequence is LIIVILPGKT…VAFRARYHLV (303 aa). Residues 530–567 are interaction with guide RNA; it reads YAEVKRVGDTLLGMATQCVQVKNVIKTSPQTLSNLCLK. 3 residues coordinate a divalent metal cation: D598, E638, and D670. The segment at 758-806 is interaction with guide RNA; it reads QGTSRPSHYHVLWDDNCFTADELQLLTYQPSAHTYVHCTRSVSIPAPAY. H809 contacts a divalent metal cation. Positions 824–847 are disordered; it reads RDSAEGSHVSGQSNGRDPQALAKA. S826 is modified (phosphoserine).

It belongs to the argonaute family. Ago subfamily. Interacts with EIF4B, IMP8, PRMT5 and TNRC6B. Interacts with APOBEC3F, APOBEC3G and APOBEC3H. Interacts with EDC4. Post-translationally, ubiquitinated on surface-exposed lysines by a SCF-like E3 ubiquitin-protein ligase complex containing ZSWIM8 during target-directed microRNA degradation (TDMD), a process that mediates degradation of microRNAs (miRNAs). Ubiquitination by the SCF-like E3 ubiquitin-protein ligase complex containing ZSWIM8 leads to its subsequent degradation, thereby exposing miRNAs for degradation. ZSWIM8 recognizes and binds AGO3 when it is engaged with a TDMD target.

The protein localises to the cytoplasm. Its subcellular location is the P-body. The enzyme catalyses Endonucleolytic cleavage to 5'-phosphomonoester.. In terms of biological role, required for RNA-mediated gene silencing (RNAi). Binds to short RNAs such as microRNAs (miRNAs) and represses the translation of mRNAs which are complementary to them. Proposed to be involved in stabilization of small RNA derivates (siRNA) derived from processed RNA polymerase III-transcribed Alu repeats containing a DR2 retinoic acid response element (RARE) in stem cells and in the subsequent siRNA-dependent degradation of a subset of RNA polymerase II-transcribed coding mRNAs by recruiting a mRNA decapping complex involving EDC4. Possesses RNA slicer activity but only on select RNAs bearing 5'- and 3'-flanking sequences to the region of guide-target complementarity. This Bos taurus (Bovine) protein is Protein argonaute-3 (AGO3).